We begin with the raw amino-acid sequence, 166 residues long: NAD(P)H-quinone oxidoreductase subunit I, chloroplastic (166 aa).

4Fe-4S ferredoxin-type domains follow at residues 55 to 84 (GRIH…VDWK) and 95 to 124 (LNYS…MTEE). Residues Cys-64, Cys-67, Cys-70, Cys-74, Cys-104, Cys-107, Cys-110, and Cys-114 each contribute to the [4Fe-4S] cluster site.

The protein belongs to the complex I 23 kDa subunit family. As to quaternary structure, NDH is composed of at least 16 different subunits, 5 of which are encoded in the nucleus. The cofactor is [4Fe-4S] cluster.

The protein localises to the plastid. Its subcellular location is the chloroplast thylakoid membrane. It catalyses the reaction a plastoquinone + NADH + (n+1) H(+)(in) = a plastoquinol + NAD(+) + n H(+)(out). It carries out the reaction a plastoquinone + NADPH + (n+1) H(+)(in) = a plastoquinol + NADP(+) + n H(+)(out). Functionally, NDH shuttles electrons from NAD(P)H:plastoquinone, via FMN and iron-sulfur (Fe-S) centers, to quinones in the photosynthetic chain and possibly in a chloroplast respiratory chain. The immediate electron acceptor for the enzyme in this species is believed to be plastoquinone. Couples the redox reaction to proton translocation, and thus conserves the redox energy in a proton gradient. This chain is NAD(P)H-quinone oxidoreductase subunit I, chloroplastic, found in Melampodium leucanthum (Black foot daisy).